The following is a 251-amino-acid chain: Probable transcriptional regulatory protein MLBr00475 (251 aa).

The protein belongs to the TACO1 family.

It localises to the cytoplasm. The chain is Probable transcriptional regulatory protein MLBr00475 from Mycobacterium leprae (strain Br4923).